A 160-amino-acid chain; its full sequence is uncharacterized protein (160 aa).

An N-terminal signal peptide occupies residues 1–18 (MELLSLAILSSFFAVANQ).

This is an uncharacterized protein from Caenorhabditis elegans.